A 316-amino-acid chain; its full sequence is ATP synthase gamma chain (316 aa).

Belongs to the ATPase gamma chain family. F-type ATPases have 2 components, CF(1) - the catalytic core - and CF(0) - the membrane proton channel. CF(1) has five subunits: alpha(3), beta(3), gamma(1), delta(1), epsilon(1). CF(0) has three main subunits: a, b and c.

The protein resides in the cellular thylakoid membrane. In terms of biological role, produces ATP from ADP in the presence of a proton gradient across the membrane. The gamma chain is believed to be important in regulating ATPase activity and the flow of protons through the CF(0) complex. The sequence is that of ATP synthase gamma chain from Prochlorococcus marinus (strain MIT 9312).